Here is a 2898-residue protein sequence, read N- to C-terminus: Papilin (2898 aa).

The signal sequence occupies residues 1–26; that stretch reads MDLSRRLCSTALVAFIVLASIHDSQS. Residues 43 to 67 form a disordered region; sequence LPESSVTPGGEGNDPDEWTPWSSPS. In terms of domain architecture, TSP type-1 1 spans 57-111; that stretch reads PDEWTPWSSPSDCSRTCGGGVSYQTRECLRRDDRGEAVCSGGSRRYFSCNTQDCP. 3 cysteine pairs are disulfide-bonded: Cys-69–Cys-105, Cys-73–Cys-110, and Cys-84–Cys-95. N-linked (GlcNAc...) asparagine glycans are attached at residues Asn-258 and Asn-319. One can recognise a TSP type-1 2 domain in the interval 338-397; it reads DTHTWTHHQFNACSASCGGGSQSRKVTCNNRITLAEVNPSLCDQKSKPVEEQACGTEPCA. The N-linked (GlcNAc...) asparagine glycan is linked to Asn-419. TSP type-1 domains are found at residues 461-521, 522-575, 576-633, and 639-694; these read NCPK…TPCE, GVDW…KSPK, CEAQ…QDCE, and CPGE…EACT. Intrachain disulfides connect Cys-462/Cys-504, Cys-473/Cys-515, and Cys-477/Cys-520. Asn-669 carries an N-linked (GlcNAc...) asparagine glycan. Disordered stretches follow at residues 699–1252 and 1323–1367; these read LPLT…CAKS and GEND…PDTK. Composition is skewed to acidic residues over residues 708–720 and 727–738; these read IEDD…EDGI and LSDDEKSEDVID. The span at 768 to 788 shows a compositional bias: polar residues; that stretch reads STGTTFEGSGYDSESTTDSGI. Residues 801–879 are compositionally biased toward low complexity; it reads EASTDLSSST…ASASESTDVS (79 aa). N-linked (GlcNAc...) asparagine glycosylation is found at Asn-889, Asn-914, Asn-917, Asn-950, and Asn-1064. Over residues 890-1053 the composition is skewed to low complexity; sequence ASDSTPESST…SDNTDITTDG (164 aa). The span at 1064–1073 shows a compositional bias: polar residues; that stretch reads NASTEGSTEG. Low complexity-rich tracts occupy residues 1076–1091 and 1104–1215; these read EDTT…TEST and STVE…IWST. Over residues 1237-1248 the composition is skewed to basic residues; the sequence is SKPRKCKPKKST. The segment covering 1330–1351 has biased composition (low complexity); the sequence is PETTTVPPTTTTEETQPETTTE. N-linked (GlcNAc...) asparagine glycans are attached at residues Asn-1489 and Asn-1623. Disulfide bonds link Cys-1612–Cys-1662, Cys-1621–Cys-1645, Cys-1637–Cys-1658, Cys-1671–Cys-1721, Cys-1680–Cys-1704, Cys-1696–Cys-1717, Cys-1730–Cys-1780, Cys-1739–Cys-1763, Cys-1755–Cys-1776, Cys-1790–Cys-1840, Cys-1799–Cys-1823, Cys-1815–Cys-1836, Cys-1849–Cys-1899, Cys-1858–Cys-1882, and Cys-1874–Cys-1895. BPTI/Kunitz inhibitor domains follow at residues 1612–1662, 1671–1721, 1730–1780, 1790–1840, and 1849–1899; these read CGLP…KDTC, CLLP…QGTC, CEQP…NYNC, CALP…EDHC, and CEIP…LARC. Asn-1750 carries N-linked (GlcNAc...) asparagine glycosylation. The tract at residues 1902-1928 is disordered; that stretch reads KPEPTTTTPATRPQPSRQDVCDEEPAP. Positions 1905 to 1916 are enriched in low complexity; sequence PTTTTPATRPQP. 3 disulfides stabilise this stretch: Cys-1922–Cys-1972, Cys-1931–Cys-1955, and Cys-1947–Cys-1968. A BPTI/Kunitz inhibitor 6 domain is found at 1922–1972; sequence CDEEPAPGECSTWVLKWHFDRKIGACRQFYYGNCGGNGNRFETENDCQQRC. A disordered region spans residues 1972-2004; that stretch reads CLSQEPPAPTPPRAPAPTRQPDPAPTVAQCSQP. The segment covering 1977–1995 has biased composition (pro residues); sequence PPAPTPPRAPAPTRQPDPA. 18 cysteine pairs are disulfide-bonded: Cys-2001-Cys-2051, Cys-2010-Cys-2034, Cys-2026-Cys-2047, Cys-2071-Cys-2121, Cys-2080-Cys-2104, Cys-2096-Cys-2117, Cys-2128-Cys-2178, Cys-2137-Cys-2161, Cys-2153-Cys-2174, Cys-2194-Cys-2244, Cys-2203-Cys-2227, Cys-2219-Cys-2240, Cys-2253-Cys-2303, Cys-2262-Cys-2286, Cys-2278-Cys-2299, Cys-2318-Cys-2371, Cys-2327-Cys-2354, and Cys-2346-Cys-2367. 6 BPTI/Kunitz inhibitor domains span residues 2001–2051, 2071–2121, 2128–2178, 2194–2244, 2253–2303, and 2318–2371; these read CSQP…SARC, CFLA…QNEC, CALP…LNFC, CAEP…ERQC, CNEP…QTVC, and CLLP…TNQC. The N-linked (GlcNAc...) asparagine glycan is linked to Asn-2020. Asn-2083 carries an N-linked (GlcNAc...) asparagine glycan. Asn-2205 carries N-linked (GlcNAc...) asparagine glycosylation. In terms of domain architecture, WAP spans 2452 to 2498; that stretch reads DIYKPGECPALSANASGCARECYTDADCRGDNKCCSDGCGQLCVHPA. N-linked (GlcNAc...) asparagine glycosylation is found at Asn-2465, Asn-2552, and Asn-2625. 3 Ig-like C2-type domains span residues 2523–2607, 2617–2697, and 2749–2840; these read PKEA…REVA, PAYI…RPVS, and PTVN…ANVS. Cys-2543 and Cys-2592 are joined by a disulfide. Intrachain disulfides connect Cys-2640–Cys-2687 and Cys-2775–Cys-2824. N-linked (GlcNAc...) asparagine glycosylation is found at Asn-2784 and Asn-2838. In terms of domain architecture, PLAC spans 2847–2886; sequence VSPECVDNPYFANCKLIVKGRYCSNPYYTQFCCRSCTLAG.

This sequence belongs to the papilin family. Homooligomer; disulfide-linked. N-glycosylated. In terms of processing, sulfated. During embryogenesis it first appears in the extracellular matrix during gastrulation and early mesoderm development at sites where basement membranes do not subsequently form. Later, migrating hemocytes prominently produce it together with other ECM components, in basement membranes that underlie epithelia and envelop muscles and emerging organs. At various life stages, it can be synthesized by other cells, such as those of the fat body, and it also occurs in a few, circumscribed regions of relatively amorphous ECM. Isoform E is specifically expressed in ECM of heart and proventriculus. Isoform C is a major component of transitory ECM deposit in the early embryo. Isoform F is a major component of the basement membrane during embryogenesis.

It is found in the secreted. The protein localises to the extracellular space. It localises to the extracellular matrix. Its subcellular location is the basement membrane. Essential extracellular matrix (ECM) protein that influences cell rearrangements. May act by modulating metalloproteinases action during organogenesis. Able to non-competitively inhibit procollagen N-proteinase, an ADAMTS metalloproteinase. This is Papilin (Ppn) from Drosophila melanogaster (Fruit fly).